A 694-amino-acid polypeptide reads, in one-letter code: Elongation factor G (694 aa).

Residues Glu-8–Thr-287 enclose the tr-type G domain. GTP-binding positions include Ala-17–Thr-24, Asp-86–His-90, and Asn-140–Asp-143.

Belongs to the TRAFAC class translation factor GTPase superfamily. Classic translation factor GTPase family. EF-G/EF-2 subfamily.

It is found in the cytoplasm. Its function is as follows. Catalyzes the GTP-dependent ribosomal translocation step during translation elongation. During this step, the ribosome changes from the pre-translocational (PRE) to the post-translocational (POST) state as the newly formed A-site-bound peptidyl-tRNA and P-site-bound deacylated tRNA move to the P and E sites, respectively. Catalyzes the coordinated movement of the two tRNA molecules, the mRNA and conformational changes in the ribosome. This Brucella ovis (strain ATCC 25840 / 63/290 / NCTC 10512) protein is Elongation factor G.